Reading from the N-terminus, the 110-residue chain is Putative anti-sigma factor antagonist TM_1442 (110 aa).

In terms of domain architecture, STAS spans 4 to 110; sequence LKLDIVEQDD…FKITDTVEEA (107 aa). A Phosphoserine modification is found at S59.

Belongs to the anti-sigma-factor antagonist family. Post-translationally, phosphorylated on a serine residue.

In terms of biological role, in the phosphorylated form it could act as an anti-anti-sigma factor that counteracts an anti-sigma factor and thus releases a sigma factor from inhibition. The sequence is that of Putative anti-sigma factor antagonist TM_1442 from Thermotoga maritima (strain ATCC 43589 / DSM 3109 / JCM 10099 / NBRC 100826 / MSB8).